A 224-amino-acid chain; its full sequence is Cytochrome c biogenesis ATP-binding export protein CcmA (224 aa).

Residues 1 to 220 (MQNAEAAPAL…EYAHAEVVGA (220 aa)) enclose the ABC transporter domain. 40–47 (GANGSGKT) contributes to the ATP binding site.

Belongs to the ABC transporter superfamily. CcmA exporter (TC 3.A.1.107) family. The complex is composed of two ATP-binding proteins (CcmA) and two transmembrane proteins (CcmB).

Its subcellular location is the cell inner membrane. The enzyme catalyses heme b(in) + ATP + H2O = heme b(out) + ADP + phosphate + H(+). Part of the ABC transporter complex CcmAB involved in the biogenesis of c-type cytochromes; once thought to export heme, this seems not to be the case, but its exact role is uncertain. Responsible for energy coupling to the transport system. In Bordetella parapertussis (strain 12822 / ATCC BAA-587 / NCTC 13253), this protein is Cytochrome c biogenesis ATP-binding export protein CcmA.